Reading from the N-terminus, the 80-residue chain is MDGGQPVPSPLVPLGNGSDYSMSLEQKTTFVFVILLFIFLGILIVRCFRILLDPYRSMPTSTWADGLEGLEKGQFDHALA.

Residues 28-48 (TTFVFVILLFIFLGILIVRCF) traverse the membrane as a helical segment.

It belongs to the cortexin family.

The protein localises to the membrane. This is Cortexin-3 (Ctxn3) from Mus musculus (Mouse).